A 164-amino-acid chain; its full sequence is Respiratory growth induced protein 2 (164 aa).

Belongs to the RGI1 family.

Its subcellular location is the cytoplasm. Involved in the control of energetic metabolism and significantly contribute to cell fitness, especially under respiratory growth conditions. The polypeptide is Respiratory growth induced protein 2 (RGI2) (Saccharomyces cerevisiae (strain RM11-1a) (Baker's yeast)).